A 31-amino-acid chain; its full sequence is Cytochrome b6-f complex subunit 6 (31 aa).

Residues 3-23 (ILISYFCFLLIFFLFTLILFF) form a helical membrane-spanning segment.

Belongs to the PetL family. In terms of assembly, the 4 large subunits of the cytochrome b6-f complex are cytochrome b6, subunit IV (17 kDa polypeptide, PetD), cytochrome f and the Rieske protein, while the 4 small subunits are PetG, PetL, PetM and PetN. The complex functions as a dimer.

The protein resides in the plastid. It localises to the chloroplast thylakoid membrane. In terms of biological role, component of the cytochrome b6-f complex, which mediates electron transfer between photosystem II (PSII) and photosystem I (PSI), cyclic electron flow around PSI, and state transitions. PetL is important for photoautotrophic growth as well as for electron transfer efficiency and stability of the cytochrome b6-f complex. The protein is Cytochrome b6-f complex subunit 6 of Gnetum parvifolium (Small-leaved jointfir).